The chain runs to 404 residues: Pectate lyase E (404 aa).

Residues 1-41 (MNNSRMSSVSTQKTTGRSALGTKSALAAIIATTMMVSVASA) form the signal peptide. Positions 182 and 225 each coordinate Ca(2+). The active site involves arginine 278.

It belongs to the polysaccharide lyase 1 family. PLBC subfamily. Ca(2+) is required as a cofactor.

Its subcellular location is the secreted. It carries out the reaction Eliminative cleavage of (1-&gt;4)-alpha-D-galacturonan to give oligosaccharides with 4-deoxy-alpha-D-galact-4-enuronosyl groups at their non-reducing ends.. It participates in glycan metabolism; pectin degradation; 2-dehydro-3-deoxy-D-gluconate from pectin: step 2/5. Involved in maceration and soft-rotting of plant tissue. Pectate lyases have been implicated as pathogenicity factors which induce maceration or rotting of plant tissue. PelE is sufficient to induce these effects under laboratory conditions. The sequence is that of Pectate lyase E (pelE) from Dickeya chrysanthemi (Pectobacterium chrysanthemi).